Here is a 385-residue protein sequence, read N- to C-terminus: MSGYGQQGVSAANIDSIRPKKRLSIGVVGSGNWGTAIAKICGENARAHGHHFRSKVRMWVFEEEIEYKGEKRKLTEVFNEAHENVKYLPGIECPPNVIAVPDVREVARRADILVFVVPHQFIERVCDQMVGLIRPGAVGISCIKGVAVSKEGVRLYSEVISEKLGIYCGVLSGANVANEVAREQFCETTIGFNPPNEVDIPREQIAAVFDRPYFSVVSVDDVAGVALGGALKNVVAMAVGFADGLEWGGNTKAAIMRRGLLEMQKFATTFFDSDPRTMVEQSCGIADLVTSCLGGRNNRCAEAFVKTGKSLETLEKELLGGQLLQGAATSKDVHEFLLTKDMVKDFPLFTAVYNISYEDMDPKDLIIVLQPLKEDSENEGGTETE.

Residues 29–34 (GSGNWG), Phe-121, Lys-144, and Ala-177 contribute to the NAD(+) site. Lys-144 is a binding site for substrate. Residue Lys-232 is the Proton acceptor of the active site. NAD(+) is bound by residues Arg-296 and Gln-325. 296–297 (RN) contributes to the substrate binding site. Position 376 is a phosphoserine (Ser-376). Thr-382 is modified (phosphothreonine).

Belongs to the NAD-dependent glycerol-3-phosphate dehydrogenase family.

It localises to the cytoplasm. It catalyses the reaction sn-glycerol 3-phosphate + NAD(+) = dihydroxyacetone phosphate + NADH + H(+). This is Glycerol-3-phosphate dehydrogenase [NAD(+)] 1 (gpd1) from Schizosaccharomyces pombe (strain 972 / ATCC 24843) (Fission yeast).